The sequence spans 236 residues: ATP synthase subunit a (236 aa).

Helical transmembrane passes span 18-38 (SNLL…VLCT), 80-100 (VTLL…AIVI), 112-132 (DPAI…YYGI), 179-199 (ILLS…IGAA), and 200-220 (IPML…AFIF).

Belongs to the ATPase A chain family. In terms of assembly, F-type ATPases have 2 components, CF(1) - the catalytic core - and CF(0) - the membrane proton channel. CF(1) has five subunits: alpha(3), beta(3), gamma(1), delta(1), epsilon(1). CF(0) has three main subunits: a(1), b(2) and c(9-12). The alpha and beta chains form an alternating ring which encloses part of the gamma chain. CF(1) is attached to CF(0) by a central stalk formed by the gamma and epsilon chains, while a peripheral stalk is formed by the delta and b chains.

The protein localises to the cell membrane. Functionally, key component of the proton channel; it plays a direct role in the translocation of protons across the membrane. This Priestia megaterium (strain ATCC 12872 / QMB1551) (Bacillus megaterium) protein is ATP synthase subunit a.